Reading from the N-terminus, the 485-residue chain is E3 ubiquitin-protein ligase TRIM68 (485 aa).

The RING-type zinc finger occupies 16 to 61; it reads CPICMTFLREPVSISCGHTFCHSCLSGLWKLPGESQNLSYTCPLCR. The B box-type zinc finger occupies 93–134; that stretch reads LKTDVCDLHKEQLTMFCKEDDMVTCEACKQSPEHEAHSVVPI. The Zn(2+) site is built by cysteine 98, histidine 101, cysteine 120, and histidine 126. Positions 144–226 form a coiled coil; it reads KLQQALEHLR…EQEKGETASK (83 aa). Positions 285 to 483 constitute a B30.2/SPRY domain; the sequence is LKTDCRVLGL…TPLTICTLGG (199 aa).

Belongs to the TRIM/RBCC family. As to quaternary structure, interacts with AR/androgen receptor (via ligand-binding domain). Interacts with KAT5/TIP60. In terms of processing, auto-ubiquitinated.

Its subcellular location is the cytoplasm. The protein resides in the perinuclear region. The protein localises to the nucleus. It carries out the reaction S-ubiquitinyl-[E2 ubiquitin-conjugating enzyme]-L-cysteine + [acceptor protein]-L-lysine = [E2 ubiquitin-conjugating enzyme]-L-cysteine + N(6)-ubiquitinyl-[acceptor protein]-L-lysine.. It functions in the pathway protein modification; protein ubiquitination. Its function is as follows. Functions as a ubiquitin E3 ligase. Acts as a coactivator of androgen receptor (AR) depending on its ubiquitin ligase activity. This Mus musculus (Mouse) protein is E3 ubiquitin-protein ligase TRIM68 (Trim68).